Consider the following 93-residue polypeptide: MPRSLKKGPFVDEHLAKKVTAQNEAGTHNVIKTWSRRSMVTPDMIGHTIGVHDGRKHVPVFVTESMVGHKLGEFAPTRTFKGHVKDDKKARRR.

Belongs to the universal ribosomal protein uS19 family.

In terms of biological role, protein S19 forms a complex with S13 that binds strongly to the 16S ribosomal RNA. In Cutibacterium acnes (strain DSM 16379 / KPA171202) (Propionibacterium acnes), this protein is Small ribosomal subunit protein uS19.